The sequence spans 131 residues: Profilin-7 (131 aa).

Cysteine 13 and cysteine 115 are oxidised to a cystine. The short motif at 81 to 97 (AVIRGKKGAGGITIKKT) is the Involved in PIP2 interaction element. At threonine 111 the chain carries Phosphothreonine.

Belongs to the profilin family. In terms of assembly, occurs in many kinds of cells as a complex with monomeric actin in a 1:1 ratio. In terms of processing, phosphorylated by MAP kinases.

The protein resides in the cytoplasm. It is found in the cytoskeleton. Its function is as follows. Binds to actin and affects the structure of the cytoskeleton. At high concentrations, profilin prevents the polymerization of actin, whereas it enhances it at low concentrations. This is Profilin-7 from Olea europaea (Common olive).